Reading from the N-terminus, the 549-residue chain is Pleckstrin homology domain-containing family A member 8 (549 aa).

The PH domain occupies 1–93 (MEGVLYKWTN…WLVALGTAKA (93 aa)). 2 disordered regions span residues 180–245 (NPDL…ENIS) and 257–312 (QNDL…QEVQ). The segment covering 203–219 (KSNDPKNLHPGETRKDL) has biased composition (basic and acidic residues). The segment covering 276–288 (EPVEEQQTDGSTE) has biased composition (acidic residues). A compositionally biased stretch (polar residues) spans 299–309 (EVSMSPTQNKQ).

It is found in the cytoplasm. The protein resides in the golgi apparatus. Its subcellular location is the trans-Golgi network membrane. The protein localises to the membrane. In terms of biological role, cargo transport protein that is required for apical transport from the trans-Golgi network (TGN) to the plasma membrane. The chain is Pleckstrin homology domain-containing family A member 8 (plekha8) from Danio rerio (Zebrafish).